A 170-amino-acid polypeptide reads, in one-letter code: Large ribosomal subunit protein uL10 (170 aa).

This sequence belongs to the universal ribosomal protein uL10 family. Part of the ribosomal stalk of the 50S ribosomal subunit. The N-terminus interacts with L11 and the large rRNA to form the base of the stalk. The C-terminus forms an elongated spine to which L12 dimers bind in a sequential fashion forming a multimeric L10(L12)X complex.

In terms of biological role, forms part of the ribosomal stalk, playing a central role in the interaction of the ribosome with GTP-bound translation factors. The protein is Large ribosomal subunit protein uL10 of Lactobacillus acidophilus (strain ATCC 700396 / NCK56 / N2 / NCFM).